We begin with the raw amino-acid sequence, 409 residues long: MDASLSPFDHQKTQNTEPKKSFITSLITLRSNNIKEDTYFVSELKPTEQKSLQELKEKLSASSSKASSMWGVSLLGGDDKADVILLKFLRARDFKVADSLRMLEKCLEWREEFKAEKLTEEDLGFKDLEGKVAYMRGYDKEGHPVCYNAYGVFKEKEMYERVFGDEEKLNKFLRWRVQVLERGVKMLHFKPGGVNSIIQVTDLKDMPKRELRVASNQILSLFQDNYPELVATKIFINVPWYFSVIYSMFSPFLTQRTKSKFVMSKEGNAAETLYKFIRPEDIPVQYGGLSRPTDSQNGPPKPASEFSIKGGEKVNIQIEGIEGGATITWDIVVGGWDLEYSAEFVPNAEESYAIVVEKPKKMKATDEAVCNSFTTVEAGKLILSVDNTLSRKKKVAAYRYTVRKSTTTV.

The region spanning 116 to 294 is the CRAL-TRIO domain; the sequence is EKLTEEDLGF…QYGGLSRPTD (179 aa). Residues 270-404 enclose the GOLD domain; the sequence is AETLYKFIRP…VAAYRYTVRK (135 aa).

This sequence belongs to the patellin family.

Its subcellular location is the membrane. The protein resides in the cytoplasm. In terms of biological role, carrier protein that may be involved in membrane-trafficking events associated with cell-plate formation during cytokinesis. Binds to some hydrophobic molecules such as phosphoinositides and promotes their transfer between the different cellular sites. The chain is Patellin-6 (PATL6) from Arabidopsis thaliana (Mouse-ear cress).